Consider the following 420-residue polypeptide: 3-isopropylmalate dehydratase large subunit (420 aa).

[4Fe-4S] cluster is bound by residues cysteine 300, cysteine 360, and cysteine 363.

It belongs to the aconitase/IPM isomerase family. LeuC type 2 subfamily. As to quaternary structure, heterodimer of LeuC and LeuD. It depends on [4Fe-4S] cluster as a cofactor.

The enzyme catalyses (2R,3S)-3-isopropylmalate = (2S)-2-isopropylmalate. It participates in amino-acid biosynthesis; L-leucine biosynthesis; L-leucine from 3-methyl-2-oxobutanoate: step 2/4. Functionally, catalyzes the isomerization between 2-isopropylmalate and 3-isopropylmalate, via the formation of 2-isopropylmaleate. In Heliobacterium modesticaldum (strain ATCC 51547 / Ice1), this protein is 3-isopropylmalate dehydratase large subunit.